Consider the following 447-residue polypeptide: C4-dicarboxylate transport protein (447 aa).

10 helical membrane-spanning segments follow: residues 21 to 41, 57 to 77, 92 to 112, 141 to 161, 163 to 183, 201 to 221, 232 to 252, 320 to 340, 345 to 365, and 368 to 388; these read HLYVQVLIAMALSILLGYFAP, LVKMIIAPVIFLTVVTGIAGM, IYFLCFSTLALVVGLVVVNIV, SLIGFLLNIIPATPVSALASG, ILQVLFFSVLFGIALASVGEA, LVAILMRAAPLGAFGAMAYTV, LAMLVGTFYITAILFVLIVLG, IYMTIAALFIAQALNIPLSWG, LLAVAMLSSKGAAGVTGAGFV, and AATLSVIPSIPVAGIGLIFGV.

This sequence belongs to the dicarboxylate/amino acid:cation symporter (DAACS) (TC 2.A.23) family.

The protein resides in the cell inner membrane. Responsible for the transport of dicarboxylates such as succinate, fumarate, and malate from the periplasm across the membrane. The protein is C4-dicarboxylate transport protein of Granulibacter bethesdensis (strain ATCC BAA-1260 / CGDNIH1).